A 295-amino-acid polypeptide reads, in one-letter code: Protein LplC (295 aa).

Helical transmembrane passes span 21–41 (ILFL…IIAG), 81–101 (VSIF…FTMA), 116–136 (LNLV…YLVV), 142–162 (LDTY…LIII), 199–219 (VIAT…FHAL), and 260–280 (GIKL…YPFL). Residues 79 to 280 (MGVSIFITVV…LPILAVYPFL (202 aa)) enclose the ABC transmembrane type-1 domain.

This sequence belongs to the binding-protein-dependent transport system permease family. CysTW subfamily.

Its subcellular location is the cell membrane. The sequence is that of Protein LplC (lplC) from Bacillus subtilis (strain 168).